The following is a 238-amino-acid chain: Small ribosomal subunit protein uS2 (238 aa).

This sequence belongs to the universal ribosomal protein uS2 family.

The sequence is that of Small ribosomal subunit protein uS2 from Chloroflexus aurantiacus (strain ATCC 29366 / DSM 635 / J-10-fl).